A 331-amino-acid polypeptide reads, in one-letter code: Benzylsuccinate synthase activating enzyme (331 aa).

The 301-residue stretch at Gln-15–Ala-315 folds into the Radical SAM core domain. Cys-29, Cys-33, Cys-36, Cys-55, Cys-58, Cys-61, Cys-65, Cys-89, Cys-92, Cys-95, and Cys-99 together coordinate [4Fe-4S] cluster. Trp-35–His-37 provides a ligand contact to S-adenosyl-L-methionine. 2 4Fe-4S ferredoxin-type domains span residues Gln-46 to Asn-75 and Thr-80 to Gln-109. Residues Gly-139, Asp-189–Lys-191, and His-263 each bind S-adenosyl-L-methionine.

This sequence belongs to the organic radical-activating enzymes family. [4Fe-4S] cluster is required as a cofactor.

It catalyses the reaction glycyl-[protein] + reduced [flavodoxin] + S-adenosyl-L-methionine = glycin-2-yl radical-[protein] + semiquinone [flavodoxin] + 5'-deoxyadenosine + L-methionine + H(+). Its pathway is xenobiotic degradation; toluene degradation [regulation]. In terms of biological role, activation of benzylsuccinate synthase under anaerobic conditions by generation of an organic free radical, using S-adenosylmethionine and reduced flavodoxin as cosubstrates to produce 5'-deoxy-adenosine. In Thauera aromatica, this protein is Benzylsuccinate synthase activating enzyme (bssD).